Consider the following 229-residue polypeptide: tRNA (guanine-N(1)-)-methyltransferase (229 aa).

Residues glycine 109 and 129 to 134 (IGDFIL) contribute to the S-adenosyl-L-methionine site.

The protein belongs to the RNA methyltransferase TrmD family. In terms of assembly, homodimer.

It is found in the cytoplasm. It catalyses the reaction guanosine(37) in tRNA + S-adenosyl-L-methionine = N(1)-methylguanosine(37) in tRNA + S-adenosyl-L-homocysteine + H(+). Specifically methylates guanosine-37 in various tRNAs. The chain is tRNA (guanine-N(1)-)-methyltransferase from Helicobacter pylori (strain Shi470).